Here is a 595-residue protein sequence, read N- to C-terminus: Pectinesterase 5 (595 aa).

The signal sequence occupies residues 1–24; sequence MIGKVVVSVASILLIVGVAIGVVA. Residues asparagine 86 and asparagine 206 are each glycosylated (N-linked (GlcNAc...) asparagine). Residues 215-239 are disordered; it reads SDKGAAPVNKGTPPVADDSPVADPD. The span at 227–239 shows a compositional bias: low complexity; it reads PPVADDSPVADPD. Residues 243 to 246 carry the RRLL cleavage motif motif; sequence RRLL. The RKLM cleavage motif signature appears at 263–266; that stretch reads RKLM. Asparagine 349 carries N-linked (GlcNAc...) asparagine glycosylation. Residues threonine 360 and glutamine 390 each contribute to the substrate site. Aspartate 413 (proton donor) is an active-site residue. Residue aspartate 434 is the Nucleophile of the active site. Substrate contacts are provided by arginine 503 and tryptophan 505.

It in the N-terminal section; belongs to the PMEI family. In the C-terminal section; belongs to the pectinesterase family. As to quaternary structure, interacts with SBT6.1. Expressed in pollen grains and pollen tubes.

The protein resides in the cell membrane. The protein localises to the secreted. Its subcellular location is the cell wall. It localises to the golgi apparatus membrane. It carries out the reaction [(1-&gt;4)-alpha-D-galacturonosyl methyl ester](n) + n H2O = [(1-&gt;4)-alpha-D-galacturonosyl](n) + n methanol + n H(+). It participates in glycan metabolism; pectin degradation; 2-dehydro-3-deoxy-D-gluconate from pectin: step 1/5. Its function is as follows. Acts in the modification of cell walls via demethylesterification of cell wall pectin. Plays an important role in growth of pollen tubes in female floral tissues, possibly via enhancing the interaction between the pollen tube and female floral tissues by modification of the cell walls. May be regulated by MYB80 during anther development and play a role in tapetum and pollen development. The protein is Pectinesterase 5 (PME5) of Arabidopsis thaliana (Mouse-ear cress).